Reading from the N-terminus, the 970-residue chain is Disease resistance protein RGA2 (970 aa).

The NB-ARC domain maps to 135–438; that stretch reads RQAVRRETGS…MAHGFLLSKG (304 aa). Position 182–189 (182–189) interacts with ATP; the sequence is GMGGLGKT. LRR repeat units follow at residues 525–548, 550–571, 573–594, 595–619, 638–662, 672–697, 752–777, 787–811, 813–832, 833–857, 859–882, 884–906, 907–931, and 946–970; these read FISLRVLNLGDSTFNKLPSSIGDL, HLRYLNLYGSGMRSLPKQLCKL, NLQTLDLQYCTKLCCLPKETSK, LGSLRNLLLDGSQSLTCMPPRIGSL, LGELGNLNLYGSIKISHLERVKNDK, KGNLHSLSMSWNNFGPHIYESEEVKV, LPCLESLELHWGSADVEYVEEVDIDV, FPSLRKLDIWDFGSLKGLLKKEGEE, FPVLEEMIIHECPFLTLSSN, LRALTSLRICYNKVATSFPEEMFKN, ANLKYLTISRCNNLKELPTSLASL, ALKSLKIQLCCALESLPEEGLEG, LSSLTELFVEHCNMLKCLPEGLQHL, and IKRCEKGIGEDWHKISHIPNVNIYI.

The protein belongs to the disease resistance NB-LRR family.

Its function is as follows. Disease resistance protein. Resistance proteins guard the plant against pathogens that contain an appropriate avirulence protein via a direct or indirect interaction with this avirulence protein. That triggers a defense system which restricts the pathogen growth. Confers a broad resistance to all known races of P.infestans. The protein is Disease resistance protein RGA2 (RGA2) of Solanum bulbocastanum (Wild potato).